A 748-amino-acid polypeptide reads, in one-letter code: Meprin A subunit alpha (748 aa).

Residues 1–20 (MLWTLPVCLLSLSFSAHIAA) form the signal peptide. Positions 21 to 66 (VSIQHLSTGHDHDDVDVGEQQKDISEINSAAGLNLFQGDILLPRTR) are excised as a propeptide. The region spanning 67-261 (NALRDPSSRW…TRLNRMYNCT (195 aa)) is the Peptidase M12A domain. The Extracellular segment spans residues 67–719 (NALRDPSSRW…RCQAMHVHGS (653 aa)). 3 cysteine pairs are disulfide-bonded: C108-C260, C129-C148, and C270-C432. N141 carries an N-linked (GlcNAc...) asparagine glycan. H156 serves as a coordination point for Zn(2+). The active site involves E157. H160 and H166 together coordinate Zn(2+). N-linked (GlcNAc...) asparagine glycans are attached at residues N223, N259, N319, N441, and N542. An MAM domain is found at 265-434 (TLLDHCAFEK…ITLTETPCPT (170 aa)). An MATH domain is found at 435–596 (GVWTIRNISQ…DDTLIIFVDF (162 aa)). Positions 641–668 (LPRRLDQRQPSRPKRSVENTGPMEDHNW) are disordered. The 41-residue stretch at 672 to 712 (FRDPCDPNPCQNEGTCVNVKGMASCRCVSGHAFFYTGERCQ) folds into the EGF-like domain. 3 disulfide bridges follow: C676-C687, C681-C696, and C698-C711. The chain crosses the membrane as a helical span at residues 720-739 (LLGLLIGCITALIFLTFITF). Residues 740–748 (SNTYQKLRQ) are Cytoplasmic-facing.

As to quaternary structure, homotetramer consisting of disulfide-linked alpha subunits, homooligomer consisting of disulfide-linked alpha subunit homodimers, or heterotetramer of two alpha and two beta subunits formed by non-covalent association of two disulfide-linked heterodimers. Interacts with MBL2 through its carbohydrate moiety. This interaction may inhibit its catalytic activity. The cofactor is Zn(2+). N-glycosylated; contains GlcNAc, galactose, mannose and a small amount of fucose. Colocalized with E-24.11 in proximal tubules of juxtamedullary nephrons.

It is found in the membrane. It catalyses the reaction Hydrolysis of protein and peptide substrates preferentially on carboxyl side of hydrophobic residues.. With respect to regulation, inhibited by actinonin. In Rattus norvegicus (Rat), this protein is Meprin A subunit alpha (Mep1a).